The chain runs to 334 residues: L-lactate dehydrogenase B chain (334 aa).

NAD(+) contacts are provided by residues 30-58 (GQVG…LEDK) and Arg100. The substrate site is built by Arg107, Asn139, and Arg170. Asn139 contributes to the NAD(+) binding site. Residue His194 is the Proton acceptor of the active site. Thr249 contributes to the substrate binding site.

This sequence belongs to the LDH/MDH superfamily. LDH family. Homotetramer.

The protein localises to the cytoplasm. It carries out the reaction (S)-lactate + NAD(+) = pyruvate + NADH + H(+). It functions in the pathway fermentation; pyruvate fermentation to lactate; (S)-lactate from pyruvate: step 1/1. Functionally, interconverts simultaneously and stereospecifically pyruvate and lactate with concomitant interconversion of NADH and NAD(+). This Squalus acanthias (Spiny dogfish) protein is L-lactate dehydrogenase B chain (ldhb).